Here is a 385-residue protein sequence, read N- to C-terminus: 1-deoxy-D-xylulose 5-phosphate reductoisomerase (385 aa).

NADPH is bound by residues Thr-10, Gly-11, Ser-12, Ile-13, Gly-36, Asn-38, and Asn-122. Lys-123 lines the 1-deoxy-D-xylulose 5-phosphate pocket. Position 124 (Glu-124) interacts with NADPH. Asp-148 contacts Mn(2+). Positions 149, 150, 174, and 197 each coordinate 1-deoxy-D-xylulose 5-phosphate. Glu-150 contributes to the Mn(2+) binding site. Residue Gly-203 participates in NADPH binding. 4 residues coordinate 1-deoxy-D-xylulose 5-phosphate: Ser-210, Asn-215, Lys-216, and Glu-219. Glu-219 contributes to the Mn(2+) binding site.

Belongs to the DXR family. Requires Mg(2+) as cofactor. It depends on Mn(2+) as a cofactor.

It catalyses the reaction 2-C-methyl-D-erythritol 4-phosphate + NADP(+) = 1-deoxy-D-xylulose 5-phosphate + NADPH + H(+). The protein operates within isoprenoid biosynthesis; isopentenyl diphosphate biosynthesis via DXP pathway; isopentenyl diphosphate from 1-deoxy-D-xylulose 5-phosphate: step 1/6. Its function is as follows. Catalyzes the NADPH-dependent rearrangement and reduction of 1-deoxy-D-xylulose-5-phosphate (DXP) to 2-C-methyl-D-erythritol 4-phosphate (MEP). This chain is 1-deoxy-D-xylulose 5-phosphate reductoisomerase, found in Geobacter sp. (strain M21).